Reading from the N-terminus, the 427-residue chain is Glutamate-1-semialdehyde 2,1-aminomutase (427 aa).

Lysine 265 is modified (N6-(pyridoxal phosphate)lysine).

Belongs to the class-III pyridoxal-phosphate-dependent aminotransferase family. HemL subfamily. As to quaternary structure, homodimer. The cofactor is pyridoxal 5'-phosphate.

The protein localises to the cytoplasm. It carries out the reaction (S)-4-amino-5-oxopentanoate = 5-aminolevulinate. The protein operates within porphyrin-containing compound metabolism; protoporphyrin-IX biosynthesis; 5-aminolevulinate from L-glutamyl-tRNA(Glu): step 2/2. This Burkholderia lata (strain ATCC 17760 / DSM 23089 / LMG 22485 / NCIMB 9086 / R18194 / 383) protein is Glutamate-1-semialdehyde 2,1-aminomutase.